The chain runs to 378 residues: MADLYTKDWTDVKDKPVARVVFIHGFGEHVNAYPEFFEALNERNIEVYTFDQRGFGHSRKGGPKKQGCTGGWSLVFPDLDYQILRASDTELPLFLWGHSMGGGLALRYGISGTHRHKLAGVIAQAPMLRCHPDTEPNFLLRKALTLVSKVHPNFLFDSDVQSQHITRDEAVNQRLQDDPLVSSVGSLQVFSDMLNRGTKTIELAPQFFLPLLITHGTDDNVTCSDSSKEFYENAGTKDKTYQSYPGFYHSLHIEKKPEVYEYLDKVAAWIYEHSKPSETVKSEQETAVEHPKPTATTSAPSASPTGVPVEEESHKATSDAVPPAEAKPEPVPASAAERAPTSESTTVPETIVASTTKVISEPAPRVTTAATADIVTNK.

Residues 97-101 (GHSMG) carry the GXSXG motif. Serine 99 serves as the catalytic Nucleophile. Catalysis depends on charge relay system residues aspartate 219 and histidine 249. Basic and acidic residues predominate over residues 276 to 292 (PSETVKSEQETAVEHPK). A disordered region spans residues 276–350 (PSETVKSEQE…TSESTTVPET (75 aa)). Over residues 293–305 (PTATTSAPSASPT) the composition is skewed to low complexity. Serine 301 is modified (phosphoserine). Residues 341–350 (TSESTTVPET) show a composition bias toward polar residues.

Belongs to the AB hydrolase superfamily. Monoacylglycerol lipase family.

The protein resides in the lipid droplet. It is found in the cytoplasm. It localises to the endoplasmic reticulum. Its subcellular location is the mitochondrion outer membrane. The enzyme catalyses Hydrolyzes glycerol monoesters of long-chain fatty acids.. Its pathway is glycerolipid metabolism; triacylglycerol degradation. Its function is as follows. Converts monoacylglycerides (MAG) to free fatty acids and glycerol. Has a strong preference for monounsaturated monoglycerides. Required for efficient degradation of MAG, short-lived intermediates of glycerolipid metabolism which may also function as lipid signaling molecules. Controls inactivation of the signaling lipid N-palmitoylethanolamine (PEA). Involved in fatty acid ethyl ester (FAEE) catabolism. FAEEs are non-oxidative metabolites of ethanol that are transiently incorporated into lipid droplets (LDs). Their mobilization by LD-resident FAEE hydrolases facilitates a controlled metabolism of these potentially toxic lipid metabolites. This Schizosaccharomyces pombe (strain 972 / ATCC 24843) (Fission yeast) protein is Putative monoglyceride lipase (mgl1).